We begin with the raw amino-acid sequence, 938 residues long: MTLLGSEHSLLIRRKFRSVLQLRLQQRRTQEQLANQGLIPPLKSPTEFHDPRKKLDSAKTEDSLRRKVRNRSDRASLVNMHILQASTAERSIPTAQMKLKRARLADDLNEKIALRPGPLELVEKNILPMDSSVKEAIKGTEVSLSKAADAFAFEDDSSRDGLSPDQARSEDPQGSGGSTPDIKSTEAPLAGPLDTIQDLTPGSESDKNDTASQLSNQSDSGKQVLGPLSTPIPVHTAVKSKSLGDSKNRHKKPKDPKPKVKKLKYHQYIPPDQKAEKSPPPMDSAYARLLQQQQLFLQLQILSQQQQQQQQQQQQQQQQQQQQRFSYPGMHQAHLKEPNEQMTRNPNSSSTPLNNTPLSPVKNSLSGQTGVSSLKPGPLPPNLDDLKVSELRQQLRIRGLPVSGTKTALVDRLRPFQDCAGNPVPNFGDITTVTFPVTPNTLPSYQSSPSGFYHFGSTSSSPPISPASSDLSAAGSLPDTFTDASPGFGLHASPVPACTDESLLSSLNGGSGPSEPDGLDSEKDKMLVEKQKVINQLTWKLRQEQRQVEELRMQLQKQKSGCNDQKPLPFLATTIKQEDVSSCPFAAQQASGKGQGHSSDSPPPACETAQLLPHCVESSGQTHVLSSTFLSPQCSPQHSPLGTLKSPQHISLPPSPNNHYFLASSSGAQRENHGVSSPNSSQGCAQMTGLQSSDKVGPTFSIPSPTFPKSSPTVPEITQPPSYEDAVKQQMTRSQQMDELLDVLIESGEMPADAREDHSCLQKIPKIPGSSCSPTTILPKSSASFEQASSGGQISFDHYATDSEEHLEVLLNSHSPIGKVSDVTLLKIGSEEPPFDGIMDGFPGKAAEDLFSAHELLPGPLSPMHTQLSPPSVDSSGLQLSFTESPWETMEWLDLTPPSSTPGFSNLTSSGPSIFNIDFLDVTDLNLNSPMDLHLQQW.

Positions 12-27 match the MEF2C-binding motif; sequence IRRKFRSVLQLRLQQR. 3 RPEL repeats span residues 18–43, 62–87, and 106–131; these read SVLQ…PPLK, DSLR…QAST, and DDLN…PMDS. A disordered region spans residues 37 to 64; it reads GLIPPLKSPTEFHDPRKKLDSAKTEDSL. Over residues 46-64 the composition is skewed to basic and acidic residues; it reads TEFHDPRKKLDSAKTEDSL. The tract at residues 153–205 is HDAC5-binding; it reads FEDDSSRDGLSPDQARSEDPQGSGGSTPDIKSTEAPLAGPLDTIQDLTPGSES. 2 disordered regions span residues 155–282 and 339–381; these read DDSS…PPPM and NEQM…PLPP. Residues 210 to 221 are compositionally biased toward polar residues; the sequence is TASQLSNQSDSG. The segment covering 248-265 has biased composition (basic residues); it reads NRHKKPKDPKPKVKKLKY. The span at 345–360 shows a compositional bias: low complexity; the sequence is NPNSSSTPLNNTPLSP. Residues 361–372 show a composition bias toward polar residues; the sequence is VKNSLSGQTGVS. The 35-residue stretch at 383-417 folds into the SAP domain; that stretch reads LDDLKVSELRQQLRIRGLPVSGTKTALVDRLRPFQ. Residues S457, S461, S465, and S469 each carry the phosphoserine; by GSK3-beta modification. The disordered stretch occupies residues 501–521; it reads ESLLSSLNGGSGPSEPDGLDS. Residues 522 to 566 adopt a coiled-coil conformation; the sequence is EKDKMLVEKQKVINQLTWKLRQEQRQVEELRMQLQKQKSGCNDQK. A disordered region spans residues 586 to 606; the sequence is AAQQASGKGQGHSSDSPPPAC. Positions 588-600 are enriched in polar residues; it reads QQASGKGQGHSSD. Residues S627, S631, S635, and S639 each carry the phosphoserine; by GSK3-beta modification. Polar residues-rich tracts occupy residues 667-694 and 701-713; these read GAQR…QSSD and SIPS…SSPT. The disordered stretch occupies residues 667–734; sequence GAQRENHGVS…DAVKQQMTRS (68 aa). The tract at residues 717–938 is required for interaction with and ubiquitination by STUB1; that stretch reads ITQPPSYEDA…SPMDLHLQQW (222 aa). A phosphoserine; by MAPK1 and MAPK3 mark is found at S815, S862, and S869. Phosphothreonine; by MAPK1 and MAPK3 is present on T896.

As to quaternary structure, homodimer. Interacts with MLLT7/FOXO4. Interacts with SRF, its association does not depend on specific DNA sequences for ternary complex formation. Interacts (via C-terminal) with EP300 (via the CREB-binding domain). Interacts with HDAC4 and HDAC5. Interacts with MEF2C. Interacts (via C-terminus) with STUB1/CHIP. Interacts with PURB. In terms of processing, ubiquitinated; by STUB1/CHIP at the C-terminus, leading to its degradation by the proteasome. Phosphorylation by GSK3B is required for STUB1/CHIP-mediated ubiquitination. Phosphorylation negatively regulates transcriptional activity. Phosphorylated; by GSK3B. In terms of tissue distribution, abundantly expressed in the heart, aorta media and bladder, weakly expressed in the stomach, intestine and lung.

The protein resides in the nucleus. Its function is as follows. Smooth muscle cells (SM) and cardiac muscle cells-specific transcriptional factor which uses the canonical single or multiple CArG boxes DNA sequence. Acts as a cofactor of serum response factor (SRF) with the potential to modulate SRF-target genes. Plays a crucial role in cardiogenesis, urinary bladder development, and differentiation of the smooth muscle cell lineage (myogenesis). Positively regulates the transcription of genes involved in vascular smooth muscle contraction. The protein is Myocardin (Myocd) of Rattus norvegicus (Rat).